The chain runs to 610 residues: C4b-binding protein alpha chain (610 aa).

An N-terminal signal peptide occupies residues Met-1–Gly-48. 8 consecutive Sushi domains span residues Ser-49 to Lys-109, Lys-110 to Ile-171, Ala-172 to Lys-236, Val-237 to Leu-296, Asn-297 to Glu-364, Val-365 to Pro-427, Asp-428 to Ala-485, and Leu-486 to Trp-543. 16 cysteine pairs are disulfide-bonded: Cys-50–Cys-95, Cys-80–Cys-107, Cys-112–Cys-153, Cys-139–Cys-169, Cys-174–Cys-217, Cys-203–Cys-234, Cys-239–Cys-281, Cys-267–Cys-294, Cys-299–Cys-350, Cys-334–Cys-362, Cys-367–Cys-412, Cys-402–Cys-425, Cys-429–Cys-471, Cys-457–Cys-483, Cys-487–Cys-528, and Cys-514–Cys-541. An N-linked (GlcNAc...) asparagine glycan is attached at Asn-66. Residue Asn-221 is glycosylated (N-linked (GlcNAc...) asparagine). Residues Asn-525 and Asn-602 are each glycosylated (N-linked (GlcNAc...) asparagine).

In terms of assembly, disulfide-linked complex of alpha and beta chains.

It is found in the secreted. Functionally, controls the classical pathway of complement activation. It binds as a cofactor to C3b/C4b inactivator (C3bINA), which then hydrolyzes the complement fragment C4b. It also accelerates the degradation of the C4bC2a complex (C3 convertase) by dissociating the complement fragment C2a. Alpha chain binds C4b. It also interacts with serum amyloid P component. This chain is C4b-binding protein alpha chain (C4BPA), found in Bos taurus (Bovine).